The primary structure comprises 212 residues: Methylthioribulose-1-phosphate dehydratase (212 aa).

2 residues coordinate Zn(2+): H97 and H99.

It belongs to the aldolase class II family. MtnB subfamily. In terms of assembly, homotetramer. Requires Zn(2+) as cofactor.

It carries out the reaction 5-(methylsulfanyl)-D-ribulose 1-phosphate = 5-methylsulfanyl-2,3-dioxopentyl phosphate + H2O. The protein operates within amino-acid biosynthesis; L-methionine biosynthesis via salvage pathway; L-methionine from S-methyl-5-thio-alpha-D-ribose 1-phosphate: step 2/6. Its function is as follows. Catalyzes the dehydration of methylthioribulose-1-phosphate (MTRu-1-P) into 2,3-diketo-5-methylthiopentyl-1-phosphate (DK-MTP-1-P). This chain is Methylthioribulose-1-phosphate dehydratase, found in Bacillus mycoides (strain KBAB4) (Bacillus weihenstephanensis).